Consider the following 557-residue polypeptide: Predicted GPI-anchored protein 17 (557 aa).

An N-terminal signal peptide occupies residues 1-19; sequence MKFSTVFTAIFALGTAVSA. N-linked (GlcNAc...) asparagine glycans are attached at residues Asn62, Asn116, Asn284, and Asn309. Residues 320 to 355 are a coiled coil; sequence LRKREYNDAVEAALRDIQKREEGIDDVEIALRKMKR. Residues Asn376, Asn471, and Asn520 are each glycosylated (N-linked (GlcNAc...) asparagine). A lipid anchor (GPI-anchor amidated asparagine) is attached at Asn533. Residues 534 to 557 constitute a propeptide, removed in mature form; sequence AGSSYGPGFYSTIFAVFGLFAMMI.

Substrate for cleavage by KEX2 in vitro.

Its subcellular location is the cell membrane. Predicted GPI-anchored protein which may have a role during host infection. This is Predicted GPI-anchored protein 17 (PGA17) from Candida albicans (strain SC5314 / ATCC MYA-2876) (Yeast).